The primary structure comprises 175 residues: Myosin regulatory light chain 2, atrial isoform (175 aa).

An N-acetylalanine modification is found at alanine 2. A phosphoserine mark is found at serine 22 and serine 23. 3 consecutive EF-hand domains span residues 32 to 67, 102 to 137, and 138 to 173; these read AQIQ…LGKV, DPEE…QADK, and FSPA…GDEK. Aspartate 45, asparagine 47, aspartate 49, and aspartate 56 together coordinate Ca(2+).

Myosin is a hexamer of 2 heavy chains and 4 light chains. In terms of tissue distribution, predominantly expressed in adult atrial muscle.

The polypeptide is Myosin regulatory light chain 2, atrial isoform (MYL7) (Homo sapiens (Human)).